The chain runs to 426 residues: Spermatogenesis-associated protein 2-like protein (426 aa).

Disordered regions lie at residues 204–223, 234–256, 269–300, and 316–347; these read AQDE…TYGA, DESS…PVEL, LWGS…EELE, and SRSG…ASSA. 2 positions are modified to phosphoserine: Ser-318 and Ser-326.

It belongs to the SPATA2 family.

The protein is Spermatogenesis-associated protein 2-like protein of Mus musculus (Mouse).